The following is a 107-amino-acid chain: Phosphoribosyl-ATP pyrophosphatase 1 (107 aa).

The protein belongs to the PRA-PH family.

It is found in the cytoplasm. It carries out the reaction 1-(5-phospho-beta-D-ribosyl)-ATP + H2O = 1-(5-phospho-beta-D-ribosyl)-5'-AMP + diphosphate + H(+). It functions in the pathway amino-acid biosynthesis; L-histidine biosynthesis; L-histidine from 5-phospho-alpha-D-ribose 1-diphosphate: step 2/9. In Rhodopseudomonas palustris (strain ATCC BAA-98 / CGA009), this protein is Phosphoribosyl-ATP pyrophosphatase 1 (hisE1).